The chain runs to 185 residues: ATP synthase subunit b, chloroplastic (185 aa).

A helical membrane pass occupies residues 31–53 (IINITVVLGILIYFGKGVLSNLL).

Belongs to the ATPase B chain family. F-type ATPases have 2 components, F(1) - the catalytic core - and F(0) - the membrane proton channel. F(1) has five subunits: alpha(3), beta(3), gamma(1), delta(1), epsilon(1). F(0) has four main subunits: a(1), b(1), b'(1) and c(10-14). The alpha and beta chains form an alternating ring which encloses part of the gamma chain. F(1) is attached to F(0) by a central stalk formed by the gamma and epsilon chains, while a peripheral stalk is formed by the delta, b and b' chains.

The protein resides in the plastid. It localises to the chloroplast thylakoid membrane. In terms of biological role, f(1)F(0) ATP synthase produces ATP from ADP in the presence of a proton or sodium gradient. F-type ATPases consist of two structural domains, F(1) containing the extramembraneous catalytic core and F(0) containing the membrane proton channel, linked together by a central stalk and a peripheral stalk. During catalysis, ATP synthesis in the catalytic domain of F(1) is coupled via a rotary mechanism of the central stalk subunits to proton translocation. Functionally, component of the F(0) channel, it forms part of the peripheral stalk, linking F(1) to F(0). The protein is ATP synthase subunit b, chloroplastic of Gnetum parvifolium (Small-leaved jointfir).